Consider the following 273-residue polypeptide: Large ribosomal subunit protein uL2 (273 aa).

The interval 228–273 (VDHPHGGGEGKTSGGRHPVTPWGFPTKGKKTRKNKRTSKFIVKKRK) is disordered. The segment covering 254–273 (KGKKTRKNKRTSKFIVKKRK) has biased composition (basic residues).

It belongs to the universal ribosomal protein uL2 family. In terms of assembly, part of the 50S ribosomal subunit. Forms a bridge to the 30S subunit in the 70S ribosome.

Its function is as follows. One of the primary rRNA binding proteins. Required for association of the 30S and 50S subunits to form the 70S ribosome, for tRNA binding and peptide bond formation. It has been suggested to have peptidyltransferase activity; this is somewhat controversial. Makes several contacts with the 16S rRNA in the 70S ribosome. The chain is Large ribosomal subunit protein uL2 from Rickettsia peacockii (strain Rustic).